The following is a 1154-amino-acid chain: Spike glycoprotein (1154 aa).

Residues 1-18 form the signal peptide; that stretch reads MLERSLLLATLLSALCSA. Residues 19–1096 lie on the Extracellular side of the membrane; that stretch reads NLFGNNSYVY…LKTYIKWPWY (1078 aa). N-linked (GlcNAc...) asparagine; by host glycosylation is found at Asn23, Asn74, Asn102, Asn139, Asn145, Asn164, Asn179, Asn213, Asn238, Asn248, Asn265, Asn272, Asn277, Asn307, Asn426, Asn448, Asn514, Asn531, Asn543, Asn580, Asn592, Asn670, and Asn677. Residues 770–875 are heptad repeat 1 (HR1); that stretch reads IPFATQLQAR…QVDRIITGRL (106 aa). A coiled-coil region spans residues 823–867; the sequence is QDVVNKQSSILTETMASLNKNFGAISSVLQDIYQQLDSIQADAQV. N-linked (GlcNAc...) asparagine; by host glycosylation is found at Asn948, Asn961, Asn980, Asn1015, Asn1039, Asn1052, and Asn1075. The segment at 1025-1106 is heptad repeat 2 (HR2); that stretch reads NDDFDFDDEL…VWLAIAFATI (82 aa). A coiled-coil region spans residues 1056–1084; it reads PILDIGSEIDRIQGVIQGLNDSLIDLETL. The helical transmembrane segment at 1097–1117 threads the bilayer; it reads VWLAIAFATIIFILILGWLFF. Residues 1118–1154 lie on the Cytoplasmic side of the membrane; it reads MTGCCGCCCGCFGIIPLMSKCGKKSSYYTTFDNDVVT.

This sequence belongs to the gammacoronaviruses spike protein family. As to quaternary structure, homotrimer; each monomer consists of a S1 and a S2 subunit. The resulting peplomers protrude from the virus surface as spikes. In terms of processing, specific enzymatic cleavages in vivo yield mature proteins. The precursor is processed into S1 and S2 by host cell furin or furin-like protease to yield the mature S1 and S2 proteins. The cleavage site between S1 and S2 requires the optimal sequence [KR]-X-[KR]-R. Additionally, a second cleavage leads to the release of a fusion peptide after viral attachment to host cell receptor.

The protein localises to the virion membrane. The protein resides in the host endoplasmic reticulum-Golgi intermediate compartment membrane. In terms of biological role, attaches the virion to the host cell membrane by interacting with sialic acids, initiating the infection. Mediates fusion of the virion and cellular membranes by acting as a class I viral fusion protein. Under the current model, the protein has at least 3 conformational states: pre-fusion native state, pre-hairpin intermediate state, and post-fusion hairpin state. During viral and target cell membrane fusion, the coiled coil regions (heptad repeats) assume a trimer-of-hairpins structure, positioning the fusion peptide in close proximity to the C-terminal region of the ectodomain. The formation of this structure appears to drive apposition and subsequent fusion of viral and target cell membranes. Its function is as follows. Acts as a viral fusion peptide after S2 cleavage occurring upon virus endocytosis. The sequence is that of Spike glycoprotein from Gallus gallus (Chicken).